The following is an 81-amino-acid chain: Exodeoxyribonuclease 7 small subunit (81 aa).

The interval 61-81 (MNDSDQEVAFETPQGGTGDAD) is disordered.

It belongs to the XseB family. Heterooligomer composed of large and small subunits.

The protein resides in the cytoplasm. It carries out the reaction Exonucleolytic cleavage in either 5'- to 3'- or 3'- to 5'-direction to yield nucleoside 5'-phosphates.. In terms of biological role, bidirectionally degrades single-stranded DNA into large acid-insoluble oligonucleotides, which are then degraded further into small acid-soluble oligonucleotides. The chain is Exodeoxyribonuclease 7 small subunit from Levilactobacillus brevis (strain ATCC 367 / BCRC 12310 / CIP 105137 / JCM 1170 / LMG 11437 / NCIMB 947 / NCTC 947) (Lactobacillus brevis).